We begin with the raw amino-acid sequence, 444 residues long: Methylenetetrahydrofolate--tRNA-(uracil-5-)-methyltransferase TrmFO (444 aa).

9 to 14 (GAGMAG) contributes to the FAD binding site.

The protein belongs to the MnmG family. TrmFO subfamily. Requires FAD as cofactor.

Its subcellular location is the cytoplasm. It carries out the reaction uridine(54) in tRNA + (6R)-5,10-methylene-5,6,7,8-tetrahydrofolate + NADH + H(+) = 5-methyluridine(54) in tRNA + (6S)-5,6,7,8-tetrahydrofolate + NAD(+). It catalyses the reaction uridine(54) in tRNA + (6R)-5,10-methylene-5,6,7,8-tetrahydrofolate + NADPH + H(+) = 5-methyluridine(54) in tRNA + (6S)-5,6,7,8-tetrahydrofolate + NADP(+). Catalyzes the folate-dependent formation of 5-methyl-uridine at position 54 (M-5-U54) in all tRNAs. The sequence is that of Methylenetetrahydrofolate--tRNA-(uracil-5-)-methyltransferase TrmFO from Cereibacter sphaeroides (strain ATCC 17029 / ATH 2.4.9) (Rhodobacter sphaeroides).